Consider the following 110-residue polypeptide: Insulin (110 aa).

A signal peptide spans 1-24 (MASLAALLPLLALLVLCRLDPAQA). 3 cysteine pairs are disulfide-bonded: Cys-31–Cys-96, Cys-43–Cys-109, and Cys-95–Cys-100. Positions 57–87 (EVEELQVGQAELGGGPGAGGLQPSALELALQ) are cleaved as a propeptide — c peptide.

This sequence belongs to the insulin family. As to quaternary structure, heterodimer of a B chain and an A chain linked by two disulfide bonds.

It is found in the secreted. Insulin decreases blood glucose concentration. It increases cell permeability to monosaccharides, amino acids and fatty acids. It accelerates glycolysis, the pentose phosphate cycle, and glycogen synthesis in liver. The sequence is that of Insulin (INS) from Oryctolagus cuniculus (Rabbit).